Here is a 276-residue protein sequence, read N- to C-terminus: Phosphatidylglycerol--prolipoprotein diacylglyceryl transferase (276 aa).

The next 3 membrane-spanning stretches (helical) occupy residues 17–37 (LAIH…FFLA), 63–83 (ILFL…CLFY), and 95–115 (ILAV…VLAS). R146 lines the a 1,2-diacyl-sn-glycero-3-phospho-(1'-sn-glycerol) pocket. 3 consecutive transmembrane segments (helical) span residues 182–202 (SQVY…WLYA), 209–229 (GQVS…AEYF), and 235–255 (FLGI…PMIV).

It belongs to the Lgt family.

The protein resides in the cell inner membrane. It catalyses the reaction L-cysteinyl-[prolipoprotein] + a 1,2-diacyl-sn-glycero-3-phospho-(1'-sn-glycerol) = an S-1,2-diacyl-sn-glyceryl-L-cysteinyl-[prolipoprotein] + sn-glycerol 1-phosphate + H(+). It functions in the pathway protein modification; lipoprotein biosynthesis (diacylglyceryl transfer). In terms of biological role, catalyzes the transfer of the diacylglyceryl group from phosphatidylglycerol to the sulfhydryl group of the N-terminal cysteine of a prolipoprotein, the first step in the formation of mature lipoproteins. The chain is Phosphatidylglycerol--prolipoprotein diacylglyceryl transferase from Polaromonas sp. (strain JS666 / ATCC BAA-500).